The primary structure comprises 243 residues: Cytochrome c1, heme protein (243 aa).

Residues 1–201 (GVDSHPPALP…CSNPWWDERK (201 aa)) are Mitochondrial intermembrane-facing. In terms of domain architecture, Cytochrome c spans 5 to 194 (HPPALPWPHF…VTCFLEWCSN (190 aa)). 3 residues coordinate heme: Cys-39, His-40, and Met-159. The chain crosses the membrane as a helical span at residues 202–221 (LLGYKTIATLAVIAVSSGYY). The Mitochondrial matrix segment spans residues 222-243 (NRFLSGLWRSRRLAFRPFNYSK).

Belongs to the cytochrome c family. As to quaternary structure, component of the ubiquinol-cytochrome c oxidoreductase (cytochrome b-c1 complex, complex III, CIII), a multisubunit enzyme composed of 3 respiratory subunits cytochrome b, cytochrome c1 and Rieske protein, 2 core protein subunits, and additional low-molecular weight protein subunits. The complex exists as an obligatory dimer and forms supercomplexes (SCs) in the inner mitochondrial membrane with cytochrome c oxidase (complex IV, CIV). Requires heme as cofactor.

It is found in the mitochondrion inner membrane. The catalysed reaction is a quinol + 2 Fe(III)-[cytochrome c](out) = a quinone + 2 Fe(II)-[cytochrome c](out) + 2 H(+)(out). In terms of biological role, component of the ubiquinol-cytochrome c oxidoreductase, a multisubunit transmembrane complex that is part of the mitochondrial electron transport chain which drives oxidative phosphorylation. The respiratory chain contains 3 multisubunit complexes succinate dehydrogenase (complex II, CII), ubiquinol-cytochrome c oxidoreductase (cytochrome b-c1 complex, complex III, CIII) and cytochrome c oxidase (complex IV, CIV), that cooperate to transfer electrons derived from NADH and succinate to molecular oxygen, creating an electrochemical gradient over the inner membrane that drives transmembrane transport and the ATP synthase. The cytochrome b-c1 complex catalyzes electron transfer from ubiquinol to cytochrome c, linking this redox reaction to translocation of protons across the mitochondrial inner membrane, with protons being carried across the membrane as hydrogens on the quinol. In the process called Q cycle, 2 protons are consumed from the matrix, 4 protons are released into the intermembrane space and 2 electrons are passed to cytochrome c. Cytochrome c1 is a catalytic core subunit containing a c-type heme. It transfers electrons from the [2Fe-2S] iron-sulfur cluster of the Rieske protein to cytochrome c. The sequence is that of Cytochrome c1, heme protein from Euglena gracilis.